The following is a 379-amino-acid chain: Dual-specificity RNA methyltransferase RlmN (379 aa).

Glutamate 97 acts as the Proton acceptor in catalysis. The Radical SAM core domain maps to 103–343 (QGGRGTLCVS…VRTTRGDDID (241 aa)). A disulfide bridge connects residues cysteine 110 and cysteine 346. [4Fe-4S] cluster is bound by residues cysteine 117, cysteine 121, and cysteine 124. S-adenosyl-L-methionine contacts are provided by residues 171–172 (GE), serine 203, 225–227 (SLH), and asparagine 303. Cysteine 346 acts as the S-methylcysteine intermediate in catalysis.

The protein belongs to the radical SAM superfamily. RlmN family. [4Fe-4S] cluster is required as a cofactor.

It is found in the cytoplasm. It catalyses the reaction adenosine(2503) in 23S rRNA + 2 reduced [2Fe-2S]-[ferredoxin] + 2 S-adenosyl-L-methionine = 2-methyladenosine(2503) in 23S rRNA + 5'-deoxyadenosine + L-methionine + 2 oxidized [2Fe-2S]-[ferredoxin] + S-adenosyl-L-homocysteine. The catalysed reaction is adenosine(37) in tRNA + 2 reduced [2Fe-2S]-[ferredoxin] + 2 S-adenosyl-L-methionine = 2-methyladenosine(37) in tRNA + 5'-deoxyadenosine + L-methionine + 2 oxidized [2Fe-2S]-[ferredoxin] + S-adenosyl-L-homocysteine. Specifically methylates position 2 of adenine 2503 in 23S rRNA and position 2 of adenine 37 in tRNAs. m2A2503 modification seems to play a crucial role in the proofreading step occurring at the peptidyl transferase center and thus would serve to optimize ribosomal fidelity. This chain is Dual-specificity RNA methyltransferase RlmN, found in Pseudomonas aeruginosa (strain ATCC 15692 / DSM 22644 / CIP 104116 / JCM 14847 / LMG 12228 / 1C / PRS 101 / PAO1).